The following is a 446-amino-acid chain: 3-phosphoshikimate 1-carboxyvinyltransferase (446 aa).

3-phosphoshikimate is bound by residues K21, S22, and R26. K21 is a binding site for phosphoenolpyruvate. Residues G92 and R120 each coordinate phosphoenolpyruvate. 4 residues coordinate 3-phosphoshikimate: S165, Q166, D308, and K335. Phosphoenolpyruvate is bound at residue Q166. D308 acts as the Proton acceptor in catalysis. Positions 339, 380, and 406 each coordinate phosphoenolpyruvate.

The protein belongs to the EPSP synthase family. Monomer.

It localises to the cytoplasm. The catalysed reaction is 3-phosphoshikimate + phosphoenolpyruvate = 5-O-(1-carboxyvinyl)-3-phosphoshikimate + phosphate. Its pathway is metabolic intermediate biosynthesis; chorismate biosynthesis; chorismate from D-erythrose 4-phosphate and phosphoenolpyruvate: step 6/7. In terms of biological role, catalyzes the transfer of the enolpyruvyl moiety of phosphoenolpyruvate (PEP) to the 5-hydroxyl of shikimate-3-phosphate (S3P) to produce enolpyruvyl shikimate-3-phosphate and inorganic phosphate. In Chlamydia caviae (strain ATCC VR-813 / DSM 19441 / 03DC25 / GPIC) (Chlamydophila caviae), this protein is 3-phosphoshikimate 1-carboxyvinyltransferase.